The primary structure comprises 266 residues: Enoyl-CoA hydratase EchA19 (266 aa).

Glu-120 is a catalytic residue. An N6-succinyllysine modification is found at Lys-135. The active site involves Glu-140. N6-succinyllysine is present on Lys-142.

The protein belongs to the enoyl-CoA hydratase/isomerase family. Homotrimer; substrate probably binds in elongated tunnels between the subunits. Succinylated in vitro at pH 8.1, succinylation reduces specific activity of the enzyme 5.5-fold; succinyl-CoA is a downstream by-product of cholesterol degradation. Can be de-succinylated in vitro by NAD-dependent protein deacylase (AC P9WGG3). Succinylation may be a negative feedback regulator of cholesterol metabolism.

The catalysed reaction is (22E)-3-oxochola-4,22-dien-24-oyl-CoA + H2O = (22R)-hydroxy-3-oxo-chol-4-ene-24-oyl-CoA. It participates in steroid metabolism; cholesterol degradation. Its function is as follows. Degradation of the cholesterol side chain involves 3 multistep beta-oxidation cycles, this may be involved in the second cycle. Hydrates 3-OCDO-CoA ((22E)-3-oxo-chol-4,22-dien-24-oyl-CoA) to make (22R)-HOCO-CoA (3-oxo-chol-4-ene-(22R)-hydroxy-24-oyl-CoA). Also acts on octenoyl-CoA. Not active on (E)-3-OCDS-CoA ((E)-3-oxocholest-4,24-dien-26-oyl-CoA) or 3-OPDC-CoA (3-oxo-4,17-pregnadiene-20-carboxyl-CoA). Hydrates the same substrate as ChsH3, but the 2 enzymes make different stereoisomers of the product. The chain is Enoyl-CoA hydratase EchA19 from Mycobacterium tuberculosis (strain ATCC 25618 / H37Rv).